Consider the following 289-residue polypeptide: ATP phosphoribosyltransferase (289 aa).

Belongs to the ATP phosphoribosyltransferase family. Long subfamily. It depends on Mg(2+) as a cofactor.

It is found in the cytoplasm. The enzyme catalyses 1-(5-phospho-beta-D-ribosyl)-ATP + diphosphate = 5-phospho-alpha-D-ribose 1-diphosphate + ATP. It functions in the pathway amino-acid biosynthesis; L-histidine biosynthesis; L-histidine from 5-phospho-alpha-D-ribose 1-diphosphate: step 1/9. Its activity is regulated as follows. Feedback inhibited by histidine. Catalyzes the condensation of ATP and 5-phosphoribose 1-diphosphate to form N'-(5'-phosphoribosyl)-ATP (PR-ATP). Has a crucial role in the pathway because the rate of histidine biosynthesis seems to be controlled primarily by regulation of HisG enzymatic activity. This Methanosarcina mazei (strain ATCC BAA-159 / DSM 3647 / Goe1 / Go1 / JCM 11833 / OCM 88) (Methanosarcina frisia) protein is ATP phosphoribosyltransferase.